Consider the following 292-residue polypeptide: Coiled-coil domain-containing protein 137 (292 aa).

The span at 1–16 shows a compositional bias: low complexity; that stretch reads MAGLRRGAAAVAPAGT. Disordered regions lie at residues 1–94, 139–183, 205–243, and 263–292; these read MAGL…AQAA, FLSK…EKAA, PELTAKPRMSVSRDQPGKKSLMLKKLLSPGSVSQPLTTS, and ALKRLQQQRQETQSPQPPHLPPGKKPEMQL. Composition is skewed to basic and acidic residues over residues 57–78, 155–164, and 173–183; these read KNQDEQEIPFRLREIMRSRQEM, PKKEKSERKK, and KARQRREEKAA. The stretch at 156–194 forms a coiled coil; that stretch reads KKEKSERKKAFQKRRLDKARQRREEKAAERLEQELLQDT. The segment covering 222-232 has biased composition (low complexity); the sequence is KKSLMLKKLLS. A Phosphoserine modification is found at serine 232. Over residues 234–243 the composition is skewed to polar residues; the sequence is GSVSQPLTTS. A coiled-coil region spans residues 247–276; it reads QRIVAEERERAVNAYRALKRLQQQRQETQS.

The protein resides in the chromosome. This chain is Coiled-coil domain-containing protein 137 (CCDC137), found in Bos taurus (Bovine).